A 287-amino-acid chain; its full sequence is ATP synthase gamma chain (287 aa).

The protein belongs to the ATPase gamma chain family. F-type ATPases have 2 components, CF(1) - the catalytic core - and CF(0) - the membrane proton channel. CF(1) has five subunits: alpha(3), beta(3), gamma(1), delta(1), epsilon(1). CF(0) has three main subunits: a, b and c.

Its subcellular location is the cell inner membrane. Produces ATP from ADP in the presence of a proton gradient across the membrane. The gamma chain is believed to be important in regulating ATPase activity and the flow of protons through the CF(0) complex. This is ATP synthase gamma chain from Azotobacter vinelandii (strain DJ / ATCC BAA-1303).